Here is a 167-residue protein sequence, read N- to C-terminus: Small heat shock protein C1 (167 aa).

The sHSP domain occupies 59-167; it reads PFYESNSIKS…EQDAKEIPIN (109 aa).

Belongs to the small heat shock protein (HSP20) family.

The sequence is that of Small heat shock protein C1 (hspC1) from Rickettsia bellii (strain RML369-C).